Here is a 177-residue protein sequence, read N- to C-terminus: Large ribosomal subunit protein uL10 (177 aa).

It belongs to the universal ribosomal protein uL10 family. In terms of assembly, part of the ribosomal stalk of the 50S ribosomal subunit. The N-terminus interacts with L11 and the large rRNA to form the base of the stalk. The C-terminus forms an elongated spine to which L12 dimers bind in a sequential fashion forming a multimeric L10(L12)X complex.

Forms part of the ribosomal stalk, playing a central role in the interaction of the ribosome with GTP-bound translation factors. This Leptospira borgpetersenii serovar Hardjo-bovis (strain JB197) protein is Large ribosomal subunit protein uL10.